The primary structure comprises 135 residues: Envelope glycoprotein N (135 aa).

A signal peptide spans 1 to 19; it reads MEWNTLVLGLLVLSVVASS. Topologically, residues 20 to 98 are virion surface; that stretch reads NNTSTASTPR…SHMYELSLSS (79 aa). Residues 21–68 are compositionally biased toward low complexity; the sequence is NTSTASTPRPSSSTHASTTVKATTVATTSTTTATSTSSTTSAKPGSTT. The interval 21–73 is disordered; it reads NTSTASTPRPSSSTHASTTVKATTVATTSTTTATSTSSTTSAKPGSTTHDPNV. Residues 99-119 form a helical membrane-spanning segment; the sequence is FAAWWTMLNALILMGAFCIVL. The Intravirion portion of the chain corresponds to 120 to 135; sequence RHCCFQNFTATTTKGY.

Belongs to the herpesviridae glycoprotein N family. In terms of assembly, interacts (via N-terminus) with gM (via N-terminus). The gM-gN heterodimer forms the gCII complex. Post-translationally, O-glycosylated.

It localises to the virion membrane. It is found in the host membrane. The protein localises to the host Golgi apparatus. Its subcellular location is the host trans-Golgi network. In terms of biological role, envelope glycoprotein necessary for proper maturation of gM and modulation of its membrane fusion activity. Also plays a critical role in virion morphogenesis. The polypeptide is Envelope glycoprotein N (Homo sapiens (Human)).